The chain runs to 269 residues: tRNA pseudouridine synthase A (269 aa).

The active-site Nucleophile is aspartate 51. Residue tyrosine 109 coordinates substrate.

This sequence belongs to the tRNA pseudouridine synthase TruA family. In terms of assembly, homodimer.

The enzyme catalyses uridine(38/39/40) in tRNA = pseudouridine(38/39/40) in tRNA. Its function is as follows. Formation of pseudouridine at positions 38, 39 and 40 in the anticodon stem and loop of transfer RNAs. The sequence is that of tRNA pseudouridine synthase A from Histophilus somni (strain 2336) (Haemophilus somnus).